Reading from the N-terminus, the 361-residue chain is MKNLFLFCRAGFEKECAAEIQQRAGELNVGGFVKANNNDAYVVYQCFEDDAADTLVKQLPLDSLIFARQMFAASDLLVDLPENDRISPIVAALSDVSKAGEVRVETPDTNEAKELSAFCRKFTVPLRQHLKKSGSLLAQENPKRPIIHVCFIGPGRAYVGYSYSNNSSPHFMGIPRLKMAADAPSRSSLKLDEAFGQFVPKEEQEERIRSGMNSVDLGACPGGWTYQLVRRGMFVSAVDNGPMDEKLMETGQVKHYREDGFRFEPQRKNIYWLVCDMVEKPARVAELIEAWAINGWFKEAIFNLKLPMKSRYKEVTAILETMQTILKENGVSDFKVQCKHLYHDRDEVTVHLWLRPNTAWN.

Residues Ser187, 220–223, Asp239, Asp259, and Asp276 each bind S-adenosyl-L-methionine; that span reads CPGG. Residue Lys305 is the Proton acceptor of the active site.

It belongs to the class I-like SAM-binding methyltransferase superfamily. RNA methyltransferase RlmE family. RlmM subfamily. As to quaternary structure, monomer.

Its subcellular location is the cytoplasm. It catalyses the reaction cytidine(2498) in 23S rRNA + S-adenosyl-L-methionine = 2'-O-methylcytidine(2498) in 23S rRNA + S-adenosyl-L-homocysteine + H(+). In terms of biological role, catalyzes the 2'-O-methylation at nucleotide C2498 in 23S rRNA. The protein is Ribosomal RNA large subunit methyltransferase M of Shewanella baltica (strain OS185).